Here is a 423-residue protein sequence, read N- to C-terminus: Histidine--tRNA ligase (423 aa).

Belongs to the class-II aminoacyl-tRNA synthetase family. As to quaternary structure, homodimer.

The protein localises to the cytoplasm. It catalyses the reaction tRNA(His) + L-histidine + ATP = L-histidyl-tRNA(His) + AMP + diphosphate + H(+). This is Histidine--tRNA ligase from Rhodococcus opacus (strain B4).